Here is a 69-residue protein sequence, read N- to C-terminus: uncharacterized protein (69 aa).

A signal peptide spans 1-21 (MNTKFILILLVLIISTIFVNS).

It localises to the secreted. This is an uncharacterized protein from Dictyostelium discoideum (Social amoeba).